Reading from the N-terminus, the 409-residue chain is Nucleoprotein (409 aa).

5 disordered regions span residues 1–32 (MASG…SSGN), 44–69 (LNSP…QQHG), 121–145 (ADVK…LRFS), 164–195 (RSGR…SEGD), and 238–259 (VDQV…DKMN). Residues 15–31 (PVIKLGGPKPPKVGSSG) are compositionally biased toward low complexity. The tract at residues 29–160 (SSGNASWFQA…GNFRWDFIPL (132 aa)) is RNA-binding. In terms of domain architecture, CoV N NTD spans 31 to 156 (GNASWFQAIK…GGPDGNFRWD (126 aa)). Residues 164–179 (RSGRSTAASSAASSRA) show a composition bias toward low complexity. Composition is skewed to basic and acidic residues over residues 180–192 (PSRD…RSGS) and 247–259 (KGKE…DKMN). Phosphoserine; by host occurs at positions 190 and 192. The CoV N CTD domain occupies 215–331 (TKAKADEMAH…QCVDGVGTRP (117 aa)). Positions 226-333 (RYCKRTIPPG…VDGVGTRPKD (108 aa)) are dimerization. A disulfide bridge connects residues Cys320 and Cys323. The interval 326-409 (GVGTRPKDDE…GDSALGENEL (84 aa)) is disordered. The segment covering 341–358 (RSSSRPATRTSSPALRQQ) has biased composition (low complexity). Residues 368-384 (KQDDEVDKALTSDEERN) are compositionally biased toward basic and acidic residues. Position 378 is a phosphothreonine; by host (Thr378). Ser379 carries the post-translational modification Phosphoserine; by host.

Belongs to the gammacoronavirus nucleocapsid protein family. Homooligomer. Both monomeric and oligomeric forms interact with RNA. Interacts with protein M. Interacts with NSP3; this interaction serves to tether the genome to the newly translated replicase-transcriptase complex at a very early stage of infection. In terms of processing, ADP-ribosylated. The ADP-ribosylation is retained in the virion during infection. Phosphorylated on serine and threonine residues.

It is found in the virion. Its subcellular location is the host endoplasmic reticulum-Golgi intermediate compartment. The protein resides in the host Golgi apparatus. In terms of biological role, packages the positive strand viral genome RNA into a helical ribonucleocapsid (RNP) and plays a fundamental role during virion assembly through its interactions with the viral genome and membrane protein M. Plays an important role in enhancing the efficiency of subgenomic viral RNA transcription as well as viral replication. In Gallus gallus (Chicken), this protein is Nucleoprotein.